A 1072-amino-acid polypeptide reads, in one-letter code: Carbamoyl phosphate synthase large chain (1072 aa).

The carboxyphosphate synthetic domain stretch occupies residues M1–E401. Residues R129, R169, G175, G176, K208, I210, E215, G241, V242, H243, Q284, and E298 each contribute to the ATP site. Residues R133–V327 enclose the ATP-grasp 1 domain. 3 residues coordinate Mg(2+): Q284, E298, and N300. Residues Q284, E298, and N300 each coordinate Mn(2+). Residues L402–S546 are oligomerization domain. The tract at residues I547–G929 is carbamoyl phosphate synthetic domain. An ATP-grasp 2 domain is found at E671–L861. Residues R707, R746, E752, G777, V778, H779, S780, Q820, and E832 each contribute to the ATP site. Q820, E832, and N834 together coordinate Mg(2+). Mn(2+)-binding residues include Q820, E832, and N834. The region spanning I930 to A1072 is the MGS-like domain. The allosteric domain stretch occupies residues I930 to A1072.

This sequence belongs to the CarB family. As to quaternary structure, composed of two chains; the small (or glutamine) chain promotes the hydrolysis of glutamine to ammonia, which is used by the large (or ammonia) chain to synthesize carbamoyl phosphate. Tetramer of heterodimers (alpha,beta)4. The cofactor is Mg(2+). Mn(2+) serves as cofactor.

The catalysed reaction is hydrogencarbonate + L-glutamine + 2 ATP + H2O = carbamoyl phosphate + L-glutamate + 2 ADP + phosphate + 2 H(+). The enzyme catalyses hydrogencarbonate + NH4(+) + 2 ATP = carbamoyl phosphate + 2 ADP + phosphate + 2 H(+). It participates in amino-acid biosynthesis; L-arginine biosynthesis; carbamoyl phosphate from bicarbonate: step 1/1. The protein operates within pyrimidine metabolism; UMP biosynthesis via de novo pathway; (S)-dihydroorotate from bicarbonate: step 1/3. Large subunit of the glutamine-dependent carbamoyl phosphate synthetase (CPSase). CPSase catalyzes the formation of carbamoyl phosphate from the ammonia moiety of glutamine, carbonate, and phosphate donated by ATP, constituting the first step of 2 biosynthetic pathways, one leading to arginine and/or urea and the other to pyrimidine nucleotides. The large subunit (synthetase) binds the substrates ammonia (free or transferred from glutamine from the small subunit), hydrogencarbonate and ATP and carries out an ATP-coupled ligase reaction, activating hydrogencarbonate by forming carboxy phosphate which reacts with ammonia to form carbamoyl phosphate. This is Carbamoyl phosphate synthase large chain from Bacillus cytotoxicus (strain DSM 22905 / CIP 110041 / 391-98 / NVH 391-98).